We begin with the raw amino-acid sequence, 1843 residues long: Zinc finger protein 142 (1843 aa).

C2H2-type zinc fingers lie at residues tyrosine 103–histidine 127 and leucine 164–histidine 186. Residues proline 294–glutamate 357 are disordered. Acidic residues predominate over residues serine 318–serine 329. Residues valine 330–aspartate 340 show a composition bias toward basic and acidic residues. Serine 354 carries the phosphoserine modification. A C2H2-type 3 zinc finger spans residues histidine 363–histidine 385. A C2H2-type 4; degenerate zinc finger spans residues leucine 391–glutamate 413. C2H2-type zinc fingers lie at residues tyrosine 453–histidine 475, phenylalanine 543–histidine 566, histidine 601–histidine 623, histidine 629–histidine 651, tyrosine 657–histidine 679, tyrosine 685–histidine 707, and tyrosine 744–histidine 767. A Glycyl lysine isopeptide (Lys-Gly) (interchain with G-Cter in SUMO2) cross-link involves residue lysine 794. 2 disordered regions span residues glutamine 819–valine 888 and proline 1103–serine 1177. Positions proline 837 to isoleucine 846 are enriched in basic and acidic residues. Positions leucine 1157 to proline 1167 are enriched in pro residues. Polar residues predominate over residues proline 1168–serine 1177. C2H2-type zinc fingers lie at residues leucine 1331–histidine 1354, isoleucine 1388–histidine 1411, phenylalanine 1446–histidine 1469, leucine 1514–histidine 1537, tyrosine 1608–histidine 1630, tyrosine 1636–histidine 1658, tyrosine 1664–histidine 1686, tyrosine 1692–histidine 1715, and phenylalanine 1721–histidine 1743. Residues lysine 1353 and lysine 1402 each participate in a glycyl lysine isopeptide (Lys-Gly) (interchain with G-Cter in SUMO2) cross-link. A Glycyl lysine isopeptide (Lys-Gly) (interchain with G-Cter in SUMO2) cross-link involves residue lysine 1747. The C2H2-type 21 zinc finger occupies tyrosine 1749–histidine 1771. Residues histidine 1795–glycine 1843 form a disordered region. A compositionally biased stretch (pro residues) spans proline 1829 to glycine 1843.

This sequence belongs to the krueppel C2H2-type zinc-finger protein family.

The protein localises to the nucleus. Its function is as follows. May be involved in transcriptional regulation. The chain is Zinc finger protein 142 from Mus musculus (Mouse).